A 531-amino-acid chain; its full sequence is Dimethylnonatriene synthase (531 aa).

A helical membrane pass occupies residues 6–26; sequence TMSVAMALAAAIFVVLCSVVA. Cysteine 464 serves as a coordination point for heme.

This sequence belongs to the cytochrome P450 family. Heme serves as cofactor.

It is found in the membrane. It catalyses the reaction (6E,10E)-geranyllinalool + reduced [NADPH--hemoprotein reductase] + O2 = (3E,7E)-4,8,12-trimethyltrideca 1,3,7,11-tetraene + but-3-en-2-one + oxidized [NADPH--hemoprotein reductase] + 2 H2O + H(+). It carries out the reaction (3S,6E)-nerolidol + reduced [NADPH--hemoprotein reductase] + O2 = (3E)-4,8-dimethylnona-1,3,7-triene + but-3-en-2-one + oxidized [NADPH--hemoprotein reductase] + 2 H2O + H(+). Its pathway is secondary metabolite biosynthesis; terpenoid biosynthesis. Its function is as follows. Involved in the biosynthesis of homoterpenes, attractants of herbivores parasitoids and predators (e.g. predatory mites and parasitoid wasps). Component of the volatile terpenes biosynthesis pathways. Converts mainly nerolidol to dimethylnonatriene (DMNT) and, to a lower extent, geranyllinalool to trimethyltridecatetraene (TMTT). The chain is Dimethylnonatriene synthase from Zea mays (Maize).